Consider the following 160-residue polypeptide: Putative UPF0479 protein YIL177W-A (160 aa).

2 consecutive transmembrane segments (helical) span residues 39–59 and 136–156; these read IVFCLPFFLALFFVPVQKVLQ and VPMIWLDVFQVFFVFLVISQH.

Belongs to the UPF0479 family.

Its subcellular location is the membrane. The protein is Putative UPF0479 protein YIL177W-A of Saccharomyces cerevisiae (strain ATCC 204508 / S288c) (Baker's yeast).